A 921-amino-acid chain; its full sequence is Inter-alpha-trypsin inhibitor heavy chain H4 (921 aa).

Positions 1–27 (MKTLSPTGYGLLLVLPLLLAVLQSTTA) are cleaved as a signal peptide. The region spanning 28 to 146 (HKNDINIYSL…KVTFELVYEE (119 aa)) is the VIT domain. N-linked (GlcNAc...) asparagine glycans are attached at residues Asn-80, Asn-205, and Asn-242. In terms of domain architecture, VWFA spans 270-428 (PKNVIFVIDT…YAFLEKMALE (159 aa)). Residues Asn-513 and Asn-577 are each glycosylated (N-linked (GlcNAc...) asparagine). A disordered region spans residues 591–646 (KPEGQEQSQVAEKPVENGNRQGNTHSGHSSFQFHSVGDRTSRLTGGSSVDPVFSHR). The span at 608 to 623 (GNRQGNTHSGHSSFQF) shows a compositional bias: polar residues. The O-linked (GalNAc...) threonine glycan is linked to Thr-712. A disulfide bridge links Cys-738 with Cys-916.

Belongs to the ITIH family. As to quaternary structure, interacts (via C-terminus) with DNAJC1 (via SANT 2 domain). Appears to be both N- and O-glycosylated. In terms of processing, cleaved by plasma kallikrein to yield 55- and 25-kDa fragments. Liver specific.

It localises to the secreted. In terms of biological role, type II acute-phase protein (APP) involved in inflammatory responses to trauma. May also play a role in liver development or regeneration. The polypeptide is Inter-alpha-trypsin inhibitor heavy chain H4 (ITIH4) (Sus scrofa (Pig)).